The chain runs to 178 residues: High mobility group B protein 1 (178 aa).

2 stretches are compositionally biased toward basic and acidic residues: residues 1–52 (MKTA…DPNK) and 101–118 (APYE…EKQM). 2 disordered regions span residues 1–59 (MKTA…APSA) and 75–178 (NPNV…EEED). The segment at residues 53-122 (PKRAPSAFFV…EYEKQMDAYN (70 aa)) is a DNA-binding region (HMG box). Phosphoserine occurs at positions 137 and 146. Residues 140–178 (NDEDEASGEEELLEKEAAGDDEEEEEEEDDDDDDDEEED) are compositionally biased toward acidic residues.

Belongs to the HMGB family. Expressed in cotyledons, roots, stems, leaves and flowers (excluding pedicels).

The protein resides in the nucleus. Functionally, binds preferentially double-stranded DNA. Modulates general plant growth and stress tolerance. Confers sensitivity to salt and genotoxic (methyl methanesulfonate, MMS) stresses. The chain is High mobility group B protein 1 (HMGB1) from Arabidopsis thaliana (Mouse-ear cress).